The chain runs to 74 residues: Kappa-scoloptoxin(07)-Ssm2a (74 aa).

An N-terminal signal peptide occupies residues 1 to 19 (MLVFYALLFVTVFSNTVMG). Positions 20 to 41 (ATIDKPIPKPILREAIEEIEVN) are excised as a propeptide.

It belongs to the scoloptoxin-07 family. Post-translationally, contains 3 disulfide bonds. As to expression, expressed by the venom gland.

The protein resides in the secreted. Functionally, toxin that inhibits voltage-gated potassium channel currents in DRG neurons (IC(50)=about 570 nM). In vivo, induces neurotoxicity shown by twitching, paralysis, and body contraction. In vivo, insects injected with this toxin showed signs of neurotoxicity including twitching, paralysis, and body contraction. This chain is Kappa-scoloptoxin(07)-Ssm2a, found in Scolopendra mutilans (Chinese red-headed centipede).